Reading from the N-terminus, the 667-residue chain is mRNA cap guanine-N(7) methyltransferase (667 aa).

Positions 1 to 19 (MYDPARDSWEERDGDEARS) are enriched in basic and acidic residues. The tract at residues 1–272 (MYDPARDSWE…RRRQEERERA (272 aa)) is disordered. Polar residues predominate over residues 33-52 (FSSSEQIYGASGENNNTTDL). A compositionally biased stretch (low complexity) spans 72-87 (SPPAQSTTQTPPSIST). Positions 88 to 128 (HVQSPVNPAAQEASNTQSLTSAAQNQSNKSTTTMDNTSGSA) are enriched in polar residues. A compositionally biased stretch (basic and acidic residues) spans 132 to 142 (PRADPSDKSNR). The segment covering 147-156 (ASPTDQNGSQ) has biased composition (polar residues). Over residues 256-272 (LVDRETLRRRQEERERA) the composition is skewed to basic and acidic residues. An mRNA cap 0 methyltransferase domain is found at 309 to 667 (SKIKGLRSFN…FYHAFCFYKV (359 aa)). 318–319 (NN) is a binding site for mRNA. Residues K322, G365, D389, D427, 470-472 (MFT), and Y475 each bind S-adenosyl-L-methionine. Residues 521 to 535 (KKERQSQAKKEKTDE) show a composition bias toward basic and acidic residues. The tract at residues 521–547 (KKERQSQAKKEKTDEAPEDGEVEEDDG) is disordered. Residues 536-547 (APEDGEVEEDDG) are compositionally biased toward acidic residues.

It belongs to the class I-like SAM-binding methyltransferase superfamily. mRNA cap 0 methyltransferase family.

It localises to the nucleus. The catalysed reaction is a 5'-end (5'-triphosphoguanosine)-ribonucleoside in mRNA + S-adenosyl-L-methionine = a 5'-end (N(7)-methyl 5'-triphosphoguanosine)-ribonucleoside in mRNA + S-adenosyl-L-homocysteine. Responsible for methylating the 5'-cap structure of mRNAs. The sequence is that of mRNA cap guanine-N(7) methyltransferase (abd1) from Neosartorya fischeri (strain ATCC 1020 / DSM 3700 / CBS 544.65 / FGSC A1164 / JCM 1740 / NRRL 181 / WB 181) (Aspergillus fischerianus).